A 263-amino-acid chain; its full sequence is Methylesterase 2 (263 aa).

The active-site Acyl-ester intermediate is Ser-85. Active-site charge relay system residues include Asp-213 and His-241.

Belongs to the AB hydrolase superfamily. Methylesterase family.

It catalyses the reaction methyl (indol-3-yl)acetate + H2O = (indol-3-yl)acetate + methanol + H(+). It carries out the reaction methyl (-)-jasmonate + H2O = jasmonate + methanol + H(+). The catalysed reaction is methyl salicylate + H2O = salicylate + methanol + H(+). It functions in the pathway plant hormone biosynthesis. Its pathway is lipid metabolism; oxylipin biosynthesis. With respect to regulation, esterase activity is down-regulated by salicylic acid (SA). Down-regulated by agrochemicals Paraoxon, 3,4-DCl and Profenofos. Methylesterase shown to have carboxylesterase activity, methyl indole-3-acetic acid (MeIAA) esterase activity, methyl salicylate (MeSA) esterase activity and methyl jasmonate (MeJA) esterase activity in vitro. The sequence is that of Methylesterase 2 from Arabidopsis thaliana (Mouse-ear cress).